The sequence spans 617 residues: Vacuolar protein sorting-associated protein 33B (617 aa).

It belongs to the STXBP/unc-18/SEC1 family. As to quaternary structure, probable core component of the class C core vacuole/endosome tethering (CORVET) complex. The common core is composed of the class C Vps proteins vps-11, vps-16 and vps-18, and which further associates with vps-8 and vps-33.2. Interacts with spe-39. Broadly expressed in somatic tissues including the pharynx, intestine, spermatheca, and in coelomocytes. Expressed in the lining of the gut lumen.

Its subcellular location is the early endosome. It is found in the late endosome membrane. The protein localises to the lysosome membrane. The protein resides in the cytoplasmic vesicle. It localises to the clathrin-coated vesicle. Its subcellular location is the recycling endosome. Its function is as follows. Plays a role in vesicle-mediated protein trafficking to lysosomal compartments and in membrane docking/fusion reactions of late endosomes/lysosomes. Believed to act as a component of the putative CORVET endosomal tethering complex which is proposed to be involved in the rab-5-to-rab-7 endosome conversion probably implicating sand-1, and via binding SNAREs and SNARE complexes to mediate tethering and docking events during SNARE-mediated membrane fusion. The CORVET complex is proposed to function as a rab-5 effector to mediate early endosome fusion probably in specific endosome subpopulations. Most likely within the CORVET complex, it is involved in the fusion of endocytic compartments. Required for sperm development and function. In Caenorhabditis elegans, this protein is Vacuolar protein sorting-associated protein 33B.